Reading from the N-terminus, the 107-residue chain is U1-lycotoxin-Ls1b (107 aa).

A signal peptide spans 1–20; the sequence is MMKVLVVVALLVTLISYSSS. A propeptide spanning residues 21–41 is cleaved from the precursor; the sequence is EGIDDLEADELSSLMANEQTR. 4 cysteine pairs are disulfide-bonded: Cys44–Cys59, Cys51–Cys68, Cys58–Cys86, and Cys70–Cys84.

Belongs to the neurotoxin 19 (CSTX) family. 04 (U1-Lctx) subfamily. In terms of tissue distribution, expressed by the venom gland.

The protein localises to the secreted. The chain is U1-lycotoxin-Ls1b from Lycosa singoriensis (Wolf spider).